A 196-amino-acid chain; its full sequence is Pro-FMRFamide-related neuropeptide VF (196 aa).

The N-terminal stretch at 1–26 (MEIISSKLFILLTLATSSLLTSNIFC) is a signal peptide. A propeptide spanning residues 27-55 (ADELVMSNLHSKENYDKYSEPRGYPKGER) is cleaved from the precursor. Phe-92 bears the Phenylalanine amide mark. Propeptides lie at residues 95-99 (NVQEE) and 115-121 (NMEVSLV). The residue at position 131 (Phe-131) is a Phenylalanine amide. The propeptide occupies 134–196 (TTTAKSVCRM…IDDAELKQEK (63 aa)).

This sequence belongs to the FARP (FMRFamide related peptide) family. Specifically expressed in the retina. In terms of tissue distribution, detected in the hypothalamus.

Its subcellular location is the secreted. In terms of biological role, efficiently inhibits forskolin-induced production of cAMP. Acts as a potent negative regulator of gonadotropin synthesis and secretion. Induces secretion of prolactin. Its function is as follows. Efficiently inhibits forskolin-induced production of cAMP. Blocks morphine-induced analgesia. Shows no inhibitory activity of forskolin-induced production of cAMP. This is Pro-FMRFamide-related neuropeptide VF from Homo sapiens (Human).